Here is a 54-residue protein sequence, read N- to C-terminus: UPF0391 membrane protein Rmet_0093 (54 aa).

2 helical membrane-spanning segments follow: residues 5-25 (ALVF…GIAA) and 30-50 (IAKI…VMGL).

This sequence belongs to the UPF0391 family.

It is found in the cell membrane. In Cupriavidus metallidurans (strain ATCC 43123 / DSM 2839 / NBRC 102507 / CH34) (Ralstonia metallidurans), this protein is UPF0391 membrane protein Rmet_0093.